The sequence spans 490 residues: Betaine aldehyde dehydrogenase (490 aa).

Positions 27 and 93 each coordinate K(+). Position 150-152 (150-152 (GAW)) interacts with NAD(+). Residue Lys-162 is the Charge relay system of the active site. 176 to 179 (KPSE) serves as a coordination point for NAD(+). Val-180 is a K(+) binding site. 230–233 (GTDT) contacts NAD(+). Leu-246 is a K(+) binding site. Residue Glu-252 is the Proton acceptor of the active site. NAD(+) contacts are provided by Gly-254, Cys-286, and Glu-387. The active-site Nucleophile is Cys-286. Cys-286 is modified (cysteine sulfenic acid (-SOH)). 2 residues coordinate K(+): Lys-457 and Gly-460. Residue Glu-464 is the Charge relay system of the active site.

This sequence belongs to the aldehyde dehydrogenase family. Dimer of dimers. It depends on K(+) as a cofactor.

It catalyses the reaction betaine aldehyde + NAD(+) + H2O = glycine betaine + NADH + 2 H(+). It functions in the pathway amine and polyamine biosynthesis; betaine biosynthesis via choline pathway; betaine from betaine aldehyde: step 1/1. Involved in the biosynthesis of the osmoprotectant glycine betaine. Catalyzes the irreversible oxidation of betaine aldehyde to the corresponding acid. This Pseudomonas fluorescens (strain SBW25) protein is Betaine aldehyde dehydrogenase.